The sequence spans 486 residues: Glutamyl-tRNA(Gln) amidotransferase subunit A (486 aa).

Residues lysine 79 and serine 154 each act as charge relay system in the active site. Serine 178 functions as the Acyl-ester intermediate in the catalytic mechanism.

This sequence belongs to the amidase family. GatA subfamily. As to quaternary structure, heterotrimer of A, B and C subunits.

It catalyses the reaction L-glutamyl-tRNA(Gln) + L-glutamine + ATP + H2O = L-glutaminyl-tRNA(Gln) + L-glutamate + ADP + phosphate + H(+). Its function is as follows. Allows the formation of correctly charged Gln-tRNA(Gln) through the transamidation of misacylated Glu-tRNA(Gln) in organisms which lack glutaminyl-tRNA synthetase. The reaction takes place in the presence of glutamine and ATP through an activated gamma-phospho-Glu-tRNA(Gln). The protein is Glutamyl-tRNA(Gln) amidotransferase subunit A of Dehalococcoides mccartyi (strain ATCC BAA-2100 / JCM 16839 / KCTC 5957 / BAV1).